The primary structure comprises 314 residues: 4-hydroxy-3-methylbut-2-enyl diphosphate reductase (314 aa).

Cys12 serves as a coordination point for [4Fe-4S] cluster. (2E)-4-hydroxy-3-methylbut-2-enyl diphosphate is bound by residues His41 and His74. Positions 41 and 74 each coordinate dimethylallyl diphosphate. Residues His41 and His74 each coordinate isopentenyl diphosphate. A [4Fe-4S] cluster-binding site is contributed by Cys96. Residue His124 participates in (2E)-4-hydroxy-3-methylbut-2-enyl diphosphate binding. Dimethylallyl diphosphate is bound at residue His124. His124 contacts isopentenyl diphosphate. The active-site Proton donor is Glu126. Thr167 provides a ligand contact to (2E)-4-hydroxy-3-methylbut-2-enyl diphosphate. Residue Cys197 coordinates [4Fe-4S] cluster. (2E)-4-hydroxy-3-methylbut-2-enyl diphosphate is bound by residues Ser225, Ser226, Asn227, and Ser269. Dimethylallyl diphosphate contacts are provided by Ser225, Ser226, Asn227, and Ser269. 4 residues coordinate isopentenyl diphosphate: Ser225, Ser226, Asn227, and Ser269.

The protein belongs to the IspH family. Requires [4Fe-4S] cluster as cofactor.

The enzyme catalyses isopentenyl diphosphate + 2 oxidized [2Fe-2S]-[ferredoxin] + H2O = (2E)-4-hydroxy-3-methylbut-2-enyl diphosphate + 2 reduced [2Fe-2S]-[ferredoxin] + 2 H(+). The catalysed reaction is dimethylallyl diphosphate + 2 oxidized [2Fe-2S]-[ferredoxin] + H2O = (2E)-4-hydroxy-3-methylbut-2-enyl diphosphate + 2 reduced [2Fe-2S]-[ferredoxin] + 2 H(+). Its pathway is isoprenoid biosynthesis; dimethylallyl diphosphate biosynthesis; dimethylallyl diphosphate from (2E)-4-hydroxy-3-methylbutenyl diphosphate: step 1/1. It functions in the pathway isoprenoid biosynthesis; isopentenyl diphosphate biosynthesis via DXP pathway; isopentenyl diphosphate from 1-deoxy-D-xylulose 5-phosphate: step 6/6. Its function is as follows. Catalyzes the conversion of 1-hydroxy-2-methyl-2-(E)-butenyl 4-diphosphate (HMBPP) into a mixture of isopentenyl diphosphate (IPP) and dimethylallyl diphosphate (DMAPP). Acts in the terminal step of the DOXP/MEP pathway for isoprenoid precursor biosynthesis. This is 4-hydroxy-3-methylbut-2-enyl diphosphate reductase from Pseudoalteromonas atlantica (strain T6c / ATCC BAA-1087).